Reading from the N-terminus, the 563-residue chain is Phosphomethylpyrimidine synthase (563 aa).

The interval proline 95 to serine 115 is disordered. Substrate-binding positions include asparagine 200, methionine 229, tyrosine 258, histidine 294, serine 314–glycine 316, aspartate 355–arginine 358, and glutamate 394. Zn(2+) is bound at residue histidine 398. Tyrosine 421 provides a ligand contact to substrate. Histidine 462 lines the Zn(2+) pocket. Residues cysteine 544, cysteine 547, and cysteine 552 each coordinate [4Fe-4S] cluster.

The protein belongs to the ThiC family. Requires [4Fe-4S] cluster as cofactor.

The catalysed reaction is 5-amino-1-(5-phospho-beta-D-ribosyl)imidazole + S-adenosyl-L-methionine = 4-amino-2-methyl-5-(phosphooxymethyl)pyrimidine + CO + 5'-deoxyadenosine + formate + L-methionine + 3 H(+). The protein operates within cofactor biosynthesis; thiamine diphosphate biosynthesis. Functionally, catalyzes the synthesis of the hydroxymethylpyrimidine phosphate (HMP-P) moiety of thiamine from aminoimidazole ribotide (AIR) in a radical S-adenosyl-L-methionine (SAM)-dependent reaction. This Chlorobium phaeobacteroides (strain BS1) protein is Phosphomethylpyrimidine synthase.